The sequence spans 131 residues: MTSYDQIWETFLNNCETSDFDVPQQEEDIYKSIRNAILHFNNRLRDNLKADNSTETVNRELSEDDLLILAHFLRYIFLLNKKTLFENTWQPFTNDVGIKNFGTQLNSLKQSVMDQKDEIERLILNAAVDYL.

The protein is SPbeta prophage-derived uncharacterized protein YomZ (yomZ) of Bacillus subtilis (strain 168).